The sequence spans 307 residues: Carbamate kinase (307 aa).

Belongs to the carbamate kinase family.

The protein localises to the cytoplasm. It catalyses the reaction hydrogencarbonate + NH4(+) + ATP = carbamoyl phosphate + ADP + H2O + H(+). It participates in metabolic intermediate metabolism; carbamoyl phosphate degradation; CO(2) and NH(3) from carbamoyl phosphate: step 1/1. Carbamate kinase involved in the arginine deiminase pathway of fermentative arginine utilization. This Halobacterium salinarum (strain ATCC 700922 / JCM 11081 / NRC-1) (Halobacterium halobium) protein is Carbamate kinase (arcC).